We begin with the raw amino-acid sequence, 186 residues long: Testis-expressed protein 29 (186 aa).

Residues 1–56 (MKDTKEIKRSPPHLLKKFAVCDIPLYDICDYNVTRERCRSLDCCFYRGVCYEKAVP) are Extracellular-facing. The chain crosses the membrane as a helical span at residues 57–77 (IYVQVFFTLIWFVAGAFIIAV). Residues 78-151 (IYRVIQGTKK…AGCCLWMKSK (74 aa)) are Cytoplasmic-facing. Disordered stretches follow at residues 104-138 (SPTP…KTES) and 151-186 (KPAK…QAAP). Residues 108–133 (ELIPEPIPEPIPEPIPEPIREPPPPV) are compositionally biased toward pro residues.

It localises to the membrane. This is Testis-expressed protein 29 (Tex29) from Mus musculus (Mouse).